A 206-amino-acid polypeptide reads, in one-letter code: Small ribosomal subunit protein uS4 (206 aa).

Residues 96–156 form the S4 RNA-binding domain; sequence GRLDNVVYRM…EKSKKQARIK (61 aa).

The protein belongs to the universal ribosomal protein uS4 family. Part of the 30S ribosomal subunit. Contacts protein S5. The interaction surface between S4 and S5 is involved in control of translational fidelity.

In terms of biological role, one of the primary rRNA binding proteins, it binds directly to 16S rRNA where it nucleates assembly of the body of the 30S subunit. Its function is as follows. With S5 and S12 plays an important role in translational accuracy. In Haemophilus influenzae (strain 86-028NP), this protein is Small ribosomal subunit protein uS4.